The following is a 347-amino-acid chain: UDP-N-acetylenolpyruvoylglucosamine reductase (347 aa).

The FAD-binding PCMH-type domain occupies 17 to 187; the sequence is IEQLAAQLVV…TAVGLKFAKA (171 aa). The active site involves arginine 163. The active-site Proton donor is serine 232. Glutamate 327 is an active-site residue.

Belongs to the MurB family. The cofactor is FAD.

The protein resides in the cytoplasm. It carries out the reaction UDP-N-acetyl-alpha-D-muramate + NADP(+) = UDP-N-acetyl-3-O-(1-carboxyvinyl)-alpha-D-glucosamine + NADPH + H(+). The protein operates within cell wall biogenesis; peptidoglycan biosynthesis. Cell wall formation. In Vibrio cholerae serotype O1 (strain ATCC 39541 / Classical Ogawa 395 / O395), this protein is UDP-N-acetylenolpyruvoylglucosamine reductase.